The sequence spans 447 residues: GTPase Der (447 aa).

EngA-type G domains follow at residues 3 to 167 (PVIA…FAQR) and 181 to 354 (IRLA…AAAM). GTP contacts are provided by residues 9 to 16 (GRPNVGKS), 56 to 60 (DTGGF), 119 to 122 (NKAE), 187 to 194 (GRPNVGKS), 234 to 238 (DTAGI), and 299 to 302 (NKWD). The KH-like domain maps to 355 to 439 (SNLSTPKLTR…PLRIELRSGK (85 aa)).

The protein belongs to the TRAFAC class TrmE-Era-EngA-EngB-Septin-like GTPase superfamily. EngA (Der) GTPase family. As to quaternary structure, associates with the 50S ribosomal subunit.

Its function is as follows. GTPase that plays an essential role in the late steps of ribosome biogenesis. The protein is GTPase Der of Herminiimonas arsenicoxydans.